Reading from the N-terminus, the 443-residue chain is Probable lysophospholipase BODYGUARD 5 (443 aa).

Positions 1–52 (MITSSFSEKCTSVINGAPSWAVFFLFDLLDYFLCIVFRFLDEVMEEKSESCH) are cleaved as a signal peptide. Cys-53 carries the N-palmitoyl cysteine lipid modification. In terms of domain architecture, AB hydrolase-1 spans 163–268 (VIFVHGFLAS…VKSVALVAPP (106 aa)). His-167 is a catalytic residue. Ser-242 (nucleophile) is an active-site residue. Residues Asp-387 and His-415 each act as charge relay system in the active site.

The protein resides in the cell membrane. Its subcellular location is the secreted. The protein localises to the cell wall. Functionally, involved in cuticle development and morphogenesis. The sequence is that of Probable lysophospholipase BODYGUARD 5 from Arabidopsis thaliana (Mouse-ear cress).